Here is a 364-residue protein sequence, read N- to C-terminus: Mitogen-activated protein kinase 11 (364 aa).

Residues 24–308 (LQGLRPVGSG…AAEALAHAYF (285 aa)) form the Protein kinase domain. Residues 30 to 38 (VGSGAYGSV) and Lys53 contribute to the ATP site. Residue Glu71 coordinates nilotinib. The active-site Proton acceptor is the Asp150. Position 180 is a phosphothreonine; by MAP2K3, MAP2K4 and MAP2K6 (Thr180). The TXY signature appears at 180-182 (TGY). Tyr182 bears the Phosphotyrosine; by MAP2K3, MAP2K4 and MAP2K6 mark. Disordered regions lie at residues 311–331 (YHDP…EAKE) and 343–364 (QEVL…EIEQ). Residues 314 to 326 (PEDEPEAEPYDES) are compositionally biased toward acidic residues. Position 323 is a phosphotyrosine; by ZAP70 (Tyr323).

Belongs to the protein kinase superfamily. CMGC Ser/Thr protein kinase family. MAP kinase subfamily. As to quaternary structure, interacts with HDAC3 and DUSP16. Mg(2+) is required as a cofactor. Post-translationally, dually phosphorylated on Thr-180 and Tyr-182 by MAP2K3/MKK3, MAP2K4/MKK4 and MAP2K6/MKK6, which activates the enzyme. In terms of tissue distribution, highest levels in the brain and heart. Also expressed in the placenta, lung, liver, skeletal muscle, kidney and pancreas.

It is found in the cytoplasm. It localises to the nucleus. It catalyses the reaction L-seryl-[protein] + ATP = O-phospho-L-seryl-[protein] + ADP + H(+). It carries out the reaction L-threonyl-[protein] + ATP = O-phospho-L-threonyl-[protein] + ADP + H(+). With respect to regulation, activated by phosphorylation on threonine and tyrosine by MAP2K3/MKK3, MAP2K4/MKK4 and MAP2K6/MKK6. MAP2K3/MKK3 and MAP2K6/MKK6 are both essential for the activation of MAPK11 induced by environmental stress. HDAC3 interacts directly and selectively with MAPK11 to repress ATF2 transcriptional activity, and regulate TNF gene expression in LPS-stimulated cells. Inhibited by SB203580 and pyridinyl-imidazole related compounds. Functionally, serine/threonine kinase which acts as an essential component of the MAP kinase signal transduction pathway. MAPK11 is one of the four p38 MAPKs which play an important role in the cascades of cellular responses evoked by extracellular stimuli such as pro-inflammatory cytokines or physical stress leading to direct activation of transcription factors. Accordingly, p38 MAPKs phosphorylate a broad range of proteins and it has been estimated that they may have approximately 200 to 300 substrates each. MAPK11 functions are mostly redundant with those of MAPK14. Some of the targets are downstream kinases which are activated through phosphorylation and further phosphorylate additional targets. RPS6KA5/MSK1 and RPS6KA4/MSK2 can directly phosphorylate and activate transcription factors such as CREB1, ATF1, the NF-kappa-B isoform RELA/NFKB3, STAT1 and STAT3, but can also phosphorylate histone H3 and the nucleosomal protein HMGN1. RPS6KA5/MSK1 and RPS6KA4/MSK2 play important roles in the rapid induction of immediate-early genes in response to stress or mitogenic stimuli, either by inducing chromatin remodeling or by recruiting the transcription machinery. On the other hand, two other kinase targets, MAPKAPK2/MK2 and MAPKAPK3/MK3, participate in the control of gene expression mostly at the post-transcriptional level, by phosphorylating ZFP36 (tristetraprolin) and ELAVL1, and by regulating EEF2K, which is important for the elongation of mRNA during translation. MKNK1/MNK1 and MKNK2/MNK2, two other kinases activated by p38 MAPKs, regulate protein synthesis by phosphorylating the initiation factor EIF4E2. In the cytoplasm, the p38 MAPK pathway is an important regulator of protein turnover. For example, CFLAR is an inhibitor of TNF-induced apoptosis whose proteasome-mediated degradation is regulated by p38 MAPK phosphorylation. Ectodomain shedding of transmembrane proteins is regulated by p38 MAPKs as well. In response to inflammatory stimuli, p38 MAPKs phosphorylate the membrane-associated metalloprotease ADAM17. Such phosphorylation is required for ADAM17-mediated ectodomain shedding of TGF-alpha family ligands, which results in the activation of EGFR signaling and cell proliferation. Additional examples of p38 MAPK substrates are the FGFR1. FGFR1 can be translocated from the extracellular space into the cytosol and nucleus of target cells, and regulates processes such as rRNA synthesis and cell growth. FGFR1 translocation requires p38 MAPK activation. In the nucleus, many transcription factors are phosphorylated and activated by p38 MAPKs in response to different stimuli. Classical examples include ATF1, ATF2, ATF6, ELK1, PTPRH, DDIT3, TP53/p53 and MEF2C and MEF2A. The p38 MAPKs are emerging as important modulators of gene expression by regulating chromatin modifiers and remodelers. The promoters of several genes involved in the inflammatory response, such as IL6, IL8 and IL12B, display a p38 MAPK-dependent enrichment of histone H3 phosphorylation on 'Ser-10' (H3S10ph) in LPS-stimulated myeloid cells. This phosphorylation enhances the accessibility of the cryptic NF-kappa-B-binding sites marking promoters for increased NF-kappa-B recruitment. Phosphorylates NLRP1 downstream of MAP3K20/ZAK in response to UV-B irradiation and ribosome collisions, promoting activation of the NLRP1 inflammasome and pyroptosis. Phosphorylates methyltransferase DOT1L on 'Ser-834', 'Thr-900', 'Ser-902', 'Thr-984', 'Ser-1001', 'Ser-1009' and 'Ser-1104'. In Homo sapiens (Human), this protein is Mitogen-activated protein kinase 11 (MAPK11).